An 86-amino-acid polypeptide reads, in one-letter code: Envelope glycoprotein N (86 aa).

The N-terminal stretch at 1–29 (MTLYKIVSKPIILLAFFFTRVVFTNEVDG) is a signal peptide. Over 30–47 (EELFYKPTCHSDTYEIIL) the chain is Virion surface. Residues 48-68 (KKFSSIWILVNTFILLCSFSL) traverse the membrane as a helical segment. The Intravirion portion of the chain corresponds to 69 to 86 (FLKYWCFKTLAKETVKGY).

Belongs to the herpesviridae glycoprotein N family. Interacts (via N-terminus) with gM (via N-terminus). The gM-gN heterodimer forms the gCII complex.

It is found in the virion membrane. Its subcellular location is the host membrane. It localises to the host Golgi apparatus. The protein localises to the host trans-Golgi network. Envelope glycoprotein necessary for proper maturation of gM and modulation of its membrane fusion activity. Also plays a critical role in virion morphogenesis. In Homo sapiens (Human), this protein is Envelope glycoprotein N.